The sequence spans 200 residues: Inner membrane-spanning protein YciB (200 aa).

Helical transmembrane passes span 1–21, 37–57, 66–86, 103–123, 136–156, and 167–187; these read MPPL…FFAN, IGAP…IALA, LPIM…LTLW, LFGG…GYVF, KLTL…EIVW, and FKVW…MPLI.

This sequence belongs to the YciB family.

It localises to the cell inner membrane. Plays a role in cell envelope biogenesis, maintenance of cell envelope integrity and membrane homeostasis. In Brucella suis biovar 1 (strain 1330), this protein is Inner membrane-spanning protein YciB.